The sequence spans 245 residues: Probable transcriptional regulatory protein CPR_1922 (245 aa).

This sequence belongs to the TACO1 family.

The protein localises to the cytoplasm. This Clostridium perfringens (strain SM101 / Type A) protein is Probable transcriptional regulatory protein CPR_1922.